We begin with the raw amino-acid sequence, 489 residues long: Glutamyl-tRNA(Gln) amidotransferase subunit A (489 aa).

Active-site charge relay system residues include Lys-75 and Ser-150. The active-site Acyl-ester intermediate is Ser-174.

Belongs to the amidase family. GatA subfamily. Heterotrimer of A, B and C subunits.

It carries out the reaction L-glutamyl-tRNA(Gln) + L-glutamine + ATP + H2O = L-glutaminyl-tRNA(Gln) + L-glutamate + ADP + phosphate + H(+). In terms of biological role, allows the formation of correctly charged Gln-tRNA(Gln) through the transamidation of misacylated Glu-tRNA(Gln) in organisms which lack glutaminyl-tRNA synthetase. The reaction takes place in the presence of glutamine and ATP through an activated gamma-phospho-Glu-tRNA(Gln). The protein is Glutamyl-tRNA(Gln) amidotransferase subunit A of Gloeobacter violaceus (strain ATCC 29082 / PCC 7421).